Here is a 312-residue protein sequence, read N- to C-terminus: Ornithine carbamoyltransferase (312 aa).

Carbamoyl phosphate-binding positions include 60-63 (STRT), Gln87, Arg111, and 138-141 (HPCQ). Residues Asn169, Asp229, and 233-234 (SM) each bind L-ornithine. Carbamoyl phosphate contacts are provided by residues 268–269 (CL) and Arg296.

It belongs to the aspartate/ornithine carbamoyltransferase superfamily. OTCase family.

It is found in the cytoplasm. The enzyme catalyses carbamoyl phosphate + L-ornithine = L-citrulline + phosphate + H(+). It participates in amino-acid biosynthesis; L-arginine biosynthesis; L-arginine from L-ornithine and carbamoyl phosphate: step 1/3. Reversibly catalyzes the transfer of the carbamoyl group from carbamoyl phosphate (CP) to the N(epsilon) atom of ornithine (ORN) to produce L-citrulline. The polypeptide is Ornithine carbamoyltransferase (Rhodopseudomonas palustris (strain BisA53)).